An 88-amino-acid polypeptide reads, in one-letter code: Auxin-responsive protein SAUR21 (88 aa).

Belongs to the ARG7 family.

It is found in the cell membrane. Its function is as follows. Functions as a positive effector of cell expansion through modulation of auxin transport. In Arabidopsis thaliana (Mouse-ear cress), this protein is Auxin-responsive protein SAUR21.